Here is a 563-residue protein sequence, read N- to C-terminus: Rhodopsin kinase GRK1 (563 aa).

An interaction with RCVRN region spans residues 1–15 (MDFGSLETVVANSAF). Positions 1–189 (MDFGSLETVV…LEAQPMGEDW (189 aa)) are N-terminal. Serine 5 is modified (phosphoserine). Threonine 8 carries the post-translational modification Phosphothreonine. Position 21 is a phosphoserine; by PKA and autocatalysis (serine 21). The RGS domain maps to 58–175 (FESVCLEQPI…LGSLYFLRFL (118 aa)). The region spanning 190–455 (FLDFRVLGKG…CDKLRAHPLF (266 aa)) is the Protein kinase domain. Residues 196–204 (LGKGGFGEV) and lysine 219 contribute to the ATP site. The active-site Proton acceptor is the aspartate 317. One can recognise an AGC-kinase C-terminal domain in the interval 456-521 (KDLNWRQLEA…GNCPIPWQEE (66 aa)). A C-terminal region spans residues 456–563 (KDLNWRQLEA…SSKSGMCLVS (108 aa)). A Phosphoserine; by autocatalysis modification is found at serine 491. Threonine 492 bears the Phosphothreonine; by autocatalysis mark. Residues 539-563 (QMPDDMKGISGGSSSSSKSGMCLVS) form a disordered region. The segment covering 550–563 (GSSSSSKSGMCLVS) has biased composition (low complexity). Cysteine 560 carries the post-translational modification Cysteine methyl ester. Cysteine 560 carries the S-farnesyl cysteine lipid modification. Positions 561-563 (LVS) are cleaved as a propeptide — removed in mature form.

Belongs to the protein kinase superfamily. AGC Ser/Thr protein kinase family. GPRK subfamily. In terms of assembly, interacts (via N-terminus) with RCVRN (via C-terminus); the interaction is Ca(2+)-dependent. Interacts (when prenylated) with PDE6D; this promotes release from membranes. May form a complex composed of RHO, GRK1 and RCVRN in a Ca(2+)-dependent manner; RCVRN prevents the interaction between GRK1 and RHO. Autophosphorylated, Ser-21 is a minor site of autophosphorylation compared to Ser-491 and Thr-492. Phosphorylation at Ser-21 is regulated by light and activated by cAMP. Post-translationally, farnesylation is required for full activity. In terms of tissue distribution, retinal-specific. Expressed in rods and cones cells.

The protein localises to the membrane. Its subcellular location is the cell projection. It localises to the cilium. The protein resides in the photoreceptor outer segment. It catalyses the reaction L-threonyl-[rhodopsin] + ATP = O-phospho-L-threonyl-[rhodopsin] + ADP + H(+). The catalysed reaction is L-seryl-[rhodopsin] + ATP = O-phospho-L-seryl-[rhodopsin] + ADP + H(+). Inhibited by RCVRN, which prevents the interaction between GRK1 and RHO. Inhibition is calcium-dependent. Inhibited by phosphorylation of Ser-21. In terms of biological role, retina-specific kinase involved in the signal turnoff via phosphorylation of rhodopsin (RHO), the G protein- coupled receptor that initiates the phototransduction cascade. This rapid desensitization is essential for scotopic vision and permits rapid adaptation to changes in illumination. May play a role in the maintenance of the outer nuclear layer in the retina. In Homo sapiens (Human), this protein is Rhodopsin kinase GRK1.